The following is a 356-amino-acid chain: Mannonate dehydratase (356 aa).

It belongs to the mannonate dehydratase family. It depends on Fe(2+) as a cofactor. Mn(2+) serves as cofactor.

The catalysed reaction is D-mannonate = 2-dehydro-3-deoxy-D-gluconate + H2O. Its pathway is carbohydrate metabolism; pentose and glucuronate interconversion. Its function is as follows. Catalyzes the dehydration of D-mannonate. This chain is Mannonate dehydratase, found in Levilactobacillus brevis (strain ATCC 367 / BCRC 12310 / CIP 105137 / JCM 1170 / LMG 11437 / NCIMB 947 / NCTC 947) (Lactobacillus brevis).